The sequence spans 444 residues: Methylenetetrahydrofolate--tRNA-(uracil-5-)-methyltransferase TrmFO (444 aa).

Position 10–15 (10–15 (GAGLAG)) interacts with FAD.

It belongs to the MnmG family. TrmFO subfamily. FAD serves as cofactor.

The protein resides in the cytoplasm. The enzyme catalyses uridine(54) in tRNA + (6R)-5,10-methylene-5,6,7,8-tetrahydrofolate + NADH + H(+) = 5-methyluridine(54) in tRNA + (6S)-5,6,7,8-tetrahydrofolate + NAD(+). The catalysed reaction is uridine(54) in tRNA + (6R)-5,10-methylene-5,6,7,8-tetrahydrofolate + NADPH + H(+) = 5-methyluridine(54) in tRNA + (6S)-5,6,7,8-tetrahydrofolate + NADP(+). Catalyzes the folate-dependent formation of 5-methyl-uridine at position 54 (M-5-U54) in all tRNAs. This chain is Methylenetetrahydrofolate--tRNA-(uracil-5-)-methyltransferase TrmFO, found in Streptococcus pneumoniae (strain 70585).